An 858-amino-acid chain; its full sequence is Autoinducer 2 sensor kinase/phosphatase LuxQ (858 aa).

2 helical membrane-spanning segments follow: residues 14-34 (STLI…GIFV) and 362-382 (LFNF…LIQI). A Histidine kinase domain is found at 488-710 (KMSHEIRTPI…TFVVTLPVKD (223 aa)). Histidine 491 carries the phosphohistidine; by autocatalysis modification. A Response regulatory domain is found at 735–850 (KVLLVEDNHT…ALHEAFVDFK (116 aa)). Aspartate 784 carries the post-translational modification 4-aspartylphosphate.

In terms of assembly, binds the complex formed by the autoinducer and LuxP.

Its subcellular location is the cell inner membrane. It carries out the reaction ATP + protein L-histidine = ADP + protein N-phospho-L-histidine.. At low cell density, in absence of autoinducer has a kinase activity, and autophosphorylates on a histidine residue. The phosphoryl group is then transferred to an aspartate residue in the response regulator domain. The phosphoryl group is transferred to LuxU, and ultimately to LuxO. At high cell density, in the presence of autoinducer, the kinase activity is inactivated, and the response regulator domain has a phosphatase activity. The protein is Autoinducer 2 sensor kinase/phosphatase LuxQ (luxQ) of Vibrio parahaemolyticus serotype O3:K6 (strain RIMD 2210633).